The chain runs to 113 residues: MSGHQRTRSRSRERRDDQDSNHPVGAVVAQELPSNDQLQQEEPPIESQDYTPGQERDEGALDFQVLGLAAYLWELTRSKTGGERGDGPNVKGEFLPNLEPVKIPEAGEGQPSV.

A compositionally biased stretch (basic residues) spans 1-12 (MSGHQRTRSRSR). 2 disordered regions span residues 1-61 (MSGH…EGAL) and 78-113 (SKTGGERGDGPNVKGEFLPNLEPVKIPEAGEGQPSV).

The protein belongs to the GAGE family.

This Homo sapiens (Human) protein is P antigen family member 3 (PAGE3).